Consider the following 843-residue polypeptide: Urease (843 aa).

The 444-residue stretch at 400 to 843 (GGIDCHVHFI…VPLSRNYFLF (444 aa)) folds into the Urease domain. Residues His405, His407, and Lys488 each coordinate Ni(2+). Lys488 is subject to N6-carboxylysine. Position 490 (His490) interacts with substrate. Ni(2+)-binding residues include His517 and His543. Catalysis depends on His591, which acts as the Proton donor. Ni(2+) is bound at residue Asp631.

It in the C-terminal section; belongs to the metallo-dependent hydrolases superfamily. Urease alpha subunit family. As to quaternary structure, homohexamer. Other oligomeric forms may exist depending on pH and presence of salts. It depends on Ni(2+) as a cofactor. Post-translationally, carboxylation allows a single lysine to coordinate two nickel ions.

The enzyme catalyses urea + 2 H2O + H(+) = hydrogencarbonate + 2 NH4(+). Its pathway is nitrogen metabolism; urea degradation; CO(2) and NH(3) from urea (urease route): step 1/1. Functionally, urea hydrolase involved in nitrogen recycling from ureide, purine, and arginine catabolism. This Oryza sativa subsp. indica (Rice) protein is Urease.